The primary structure comprises 315 residues: Protein-export membrane protein SecF (315 aa).

The next 6 membrane-spanning stretches (helical) occupy residues 35–55 (MVLYPLVVFLVAALILAVHFP), 152–172 (QGIKAVIYAFIGMAIVVFLFF), 181–201 (IIFSAFSDMVIALATMGILGI), 205–225 (TATIAALLMLIGYTVDSNILL), 242–264 (LSAVSTGFTMSTTTLGALFILWL), and 282–302 (LLADFMNTWIFNAGVLRWYIA).

The protein belongs to the SecD/SecF family. SecF subfamily. Part of the protein translocation apparatus. Forms a complex with SecD.

It localises to the cell membrane. Its function is as follows. Involved in protein export. The sequence is that of Protein-export membrane protein SecF from Thermococcus gammatolerans (strain DSM 15229 / JCM 11827 / EJ3).